The sequence spans 77 residues: Conotoxin LiC42 (77 aa).

Residues 1 to 22 (MKLTCVLIIAVLFLTASQLITA) form the signal peptide. A propeptide spanning residues 23 to 47 (DYSRDKQEYGAERLRDAMGKFKGSR) is cleaved from the precursor. 3 cysteine pairs are disulfide-bonded: Cys-49–Cys-62, Cys-56–Cys-67, and Cys-61–Cys-76.

The protein belongs to the conotoxin O1 superfamily. Expressed by the venom duct.

It localises to the secreted. This chain is Conotoxin LiC42, found in Conus lividus (Livid cone).